The following is a 407-amino-acid chain: Nicotinate phosphoribosyltransferase (407 aa).

Residue His224 is modified to Phosphohistidine; by autocatalysis.

Belongs to the NAPRTase family. In terms of processing, transiently phosphorylated on a His residue during the reaction cycle. Phosphorylation strongly increases the affinity for substrates and increases the rate of nicotinate D-ribonucleotide production. Dephosphorylation regenerates the low-affinity form of the enzyme, leading to product release.

It catalyses the reaction nicotinate + 5-phospho-alpha-D-ribose 1-diphosphate + ATP + H2O = nicotinate beta-D-ribonucleotide + ADP + phosphate + diphosphate. The protein operates within cofactor biosynthesis; NAD(+) biosynthesis; nicotinate D-ribonucleotide from nicotinate: step 1/1. Catalyzes the synthesis of beta-nicotinate D-ribonucleotide from nicotinate and 5-phospho-D-ribose 1-phosphate at the expense of ATP. The chain is Nicotinate phosphoribosyltransferase from Pseudomonas savastanoi pv. phaseolicola (strain 1448A / Race 6) (Pseudomonas syringae pv. phaseolicola (strain 1448A / Race 6)).